We begin with the raw amino-acid sequence, 284 residues long: Shikimate dehydrogenase (NADP(+)) (284 aa).

Residues 20–22 (SIS) and serine 67 each bind shikimate. The Proton acceptor role is filled by lysine 71. Aspartate 83 contributes to the NADP(+) binding site. Shikimate is bound by residues asparagine 92 and aspartate 107. NADP(+) contacts are provided by residues 129-133 (GAGGA) and isoleucine 227. A shikimate-binding site is contributed by tyrosine 229. NADP(+) is bound at residue glycine 250.

The protein belongs to the shikimate dehydrogenase family. In terms of assembly, homodimer.

It carries out the reaction shikimate + NADP(+) = 3-dehydroshikimate + NADPH + H(+). It functions in the pathway metabolic intermediate biosynthesis; chorismate biosynthesis; chorismate from D-erythrose 4-phosphate and phosphoenolpyruvate: step 4/7. Its function is as follows. Involved in the biosynthesis of the chorismate, which leads to the biosynthesis of aromatic amino acids. Catalyzes the reversible NADPH linked reduction of 3-dehydroshikimate (DHSA) to yield shikimate (SA). This Streptococcus pneumoniae (strain ATCC 700669 / Spain 23F-1) protein is Shikimate dehydrogenase (NADP(+)).